The sequence spans 277 residues: Phosphoenolpyruvate synthase regulatory protein (277 aa).

An ADP-binding site is contributed by 157–164; that stretch reads GVSRCGKT.

The protein belongs to the pyruvate, phosphate/water dikinase regulatory protein family. PSRP subfamily.

It carries out the reaction [pyruvate, water dikinase] + ADP = [pyruvate, water dikinase]-phosphate + AMP + H(+). It catalyses the reaction [pyruvate, water dikinase]-phosphate + phosphate + H(+) = [pyruvate, water dikinase] + diphosphate. Bifunctional serine/threonine kinase and phosphorylase involved in the regulation of the phosphoenolpyruvate synthase (PEPS) by catalyzing its phosphorylation/dephosphorylation. This Salmonella agona (strain SL483) protein is Phosphoenolpyruvate synthase regulatory protein.